The primary structure comprises 204 residues: Refilin-A (204 aa).

A disordered region spans residues 1–52; the sequence is MVGHLHLQAMGDTREQSRDGLLDSPDSGLPPSPSPSPPFYALSPGTLDTRTT. The segment covering 12 to 21 has biased composition (basic and acidic residues); sequence DTREQSRDGL. The span at 28 to 38 shows a compositional bias: pro residues; sequence GLPPSPSPSPP. Residue Arg151 is modified to Asymmetric dimethylarginine.

Belongs to the Refilin family. Interacts with FLNA and FLNB. Detected in various tissues, with highest expression in lung, followed by spleen.

It localises to the cytoplasm. Its subcellular location is the cytoskeleton. Involved in the regulation of the perinuclear actin network and nuclear shape through interaction with filamins. Plays an essential role in the formation of cartilaginous skeletal elements. The chain is Refilin-A (Rflna) from Mus musculus (Mouse).